Consider the following 221-residue polypeptide: Ribosomal RNA large subunit methyltransferase E (221 aa).

Positions 60, 62, 89, 105, and 134 each coordinate S-adenosyl-L-methionine. Catalysis depends on Lys174, which acts as the Proton acceptor. Positions Lys199–Gly221 are disordered.

Belongs to the class I-like SAM-binding methyltransferase superfamily. RNA methyltransferase RlmE family.

The protein localises to the cytoplasm. It catalyses the reaction uridine(2552) in 23S rRNA + S-adenosyl-L-methionine = 2'-O-methyluridine(2552) in 23S rRNA + S-adenosyl-L-homocysteine + H(+). Specifically methylates the uridine in position 2552 of 23S rRNA at the 2'-O position of the ribose in the fully assembled 50S ribosomal subunit. The sequence is that of Ribosomal RNA large subunit methyltransferase E from Ralstonia nicotianae (strain ATCC BAA-1114 / GMI1000) (Ralstonia solanacearum).